We begin with the raw amino-acid sequence, 283 residues long: tRNA (guanine-N(1)-)-methyltransferase (283 aa).

S-adenosyl-L-methionine-binding positions include Gly113 and 133–138 (IGDYVL).

It belongs to the RNA methyltransferase TrmD family. As to quaternary structure, homodimer.

It localises to the cytoplasm. It carries out the reaction guanosine(37) in tRNA + S-adenosyl-L-methionine = N(1)-methylguanosine(37) in tRNA + S-adenosyl-L-homocysteine + H(+). Functionally, specifically methylates guanosine-37 in various tRNAs. This is tRNA (guanine-N(1)-)-methyltransferase from Parafrankia sp. (strain EAN1pec).